Consider the following 123-residue polypeptide: Beta-2-microglobulin (123 aa).

The N-terminal stretch at 1-21 is a signal peptide; it reads MSRLFLFALLGHLCFLPYLDA. The region spanning 29–118 is the Ig-like C1-type domain; that stretch reads PRVQVYSRYP…STLNEPKVVK (90 aa). Cys-49 and Cys-104 form a disulfide bridge.

The protein belongs to the beta-2-microglobulin family. Heterodimer of an alpha chain and a beta chain. Beta-2-microglobulin is the beta-chain of major histocompatibility complex class I molecules.

It localises to the secreted. In terms of biological role, component of the class I major histocompatibility complex (MHC). Involved in the presentation of peptide antigens to the immune system. The chain is Beta-2-microglobulin (B2M) from Monodelphis domestica (Gray short-tailed opossum).